The sequence spans 429 residues: uncharacterized protein (429 aa).

Transmembrane regions (helical) follow at residues 26–46 (VALTGAAAVVVLPVITSHDIF), 51–71 (TGIDWDVIFLLVGMMIIVGVL), 99–119 (LVLVSALASALLDNVTTVLLI), 135–155 (TSFLMAEVFASNIGGAATLVG), 173–193 (FMLHLTPLVVIVLIALIAVLP), 223–243 (LLVKCGAVLVLVFAAFVAHPV), 278–298 (TLLFFAGLFIMVGALVKTGVV), 311–331 (GNIVATAFLILGVSAPISGII), 361–381 (WWALALGADFGGNLTAIGASA), and 407–427 (VVTAVSIALAAIYLWLRYFVL).

It belongs to the CitM (TC 2.A.11) transporter family.

Its subcellular location is the cell membrane. This is an uncharacterized protein from Mycobacterium tuberculosis (strain ATCC 25618 / H37Rv).